We begin with the raw amino-acid sequence, 324 residues long: MAKIDVHHHFYPPAMRQALDRAGGDPSGWYIPPWTLELDQDITRQMKVTTTILSVTAPGPGIEPDVTKAAALARSCNESAAAIRDAKPQQYGFFASVPSLFDTAAVLKEIEYACTTLRADGVTLFTRYGKGSNYLGHAAFRPIWADLSRRGAVVFIHPTHPVDTQLINTWLPQPMFDYPHETGRAAMDLLTSGILQDYPGCKIILSHAGGTLPYLIHRAATMLPLMPRTLGLSTEELVEAARTFYFDTAISSNPVTLKALFEFAAPGHVLFGSDFPNAPHDAILRFTNFLEAYELPEETKRQVDSGAALELFPRLKGILDKAKL.

4 residues coordinate Zn(2+): His-7, His-9, His-157, and Asp-274.

It belongs to the metallo-dependent hydrolases superfamily. ACMSD family. As to quaternary structure, monomer.

The protein resides in the cytoplasm. It localises to the cytosol. It carries out the reaction 6-methylsalicylate + H(+) = 3-methylphenol + CO2. It functions in the pathway mycotoxin biosynthesis; patulin biosynthesis. Functionally, 6-methylsalicylic acid decarboxylase; part of the gene cluster that mediates the biosynthesis of patulin, an acetate-derived tetraketide mycotoxin produced by several fungal species that shows antimicrobial properties against several bacteria. PatG catalyzes the decarboxylation of 6-methylsalicylic acid to yield m-cresol. The pathway begins with the synthesis of 6-methylsalicylic acid by the polyketide synthase (PKS) patK via condensation of acetate and malonate units. The 6-methylsalicylic acid decarboxylase patG then catalyzes the decarboxylation of 6-methylsalicylic acid to yield m-cresol (also known as 3-methylphenol). These first reactions occur in the cytosol. The intermediate m-cresol is then transported into the endoplasmic reticulum where the cytochrome P450 monooxygenase patH converts it to m-hydroxybenzyl alcohol, which is further converted to gentisyl alcohol by the cytochrome P450 monooxygenase patI. The oxidoreductases patJ and patO further convert gentisyl alcohol to isoepoxydon in the vacuole. PatN catalyzes then the transformation of isoepoxydon into phyllostine. The cluster protein patF is responsible for the conversion from phyllostine to neopatulin whereas the alcohol dehydrogenase patD converts neopatulin to E-ascladiol. The steps between isoepoxydon and E-ascladiol occur in the cytosol, and E-ascladiol is probably secreted to the extracellular space by one of the cluster-specific transporters patC or patM. Finally, the secreted patulin synthase patE catalyzes the conversion of E-ascladiol to patulin. The polypeptide is 6-methylsalicylic acid decarboxylase (Penicillium expansum (Blue mold rot fungus)).